The sequence spans 149 residues: Ribonuclease H (149 aa).

Residues 1-145 (MKKVIIYTDG…CDKLANEAMD (145 aa)) form the RNase H type-1 domain. Residues D9, E50, D72, and D137 each coordinate Mg(2+).

Belongs to the RNase H family. In terms of assembly, monomer. The cofactor is Mg(2+).

The protein localises to the cytoplasm. It catalyses the reaction Endonucleolytic cleavage to 5'-phosphomonoester.. Its function is as follows. Endonuclease that specifically degrades the RNA of RNA-DNA hybrids. The sequence is that of Ribonuclease H from Clostridium botulinum (strain ATCC 19397 / Type A).